The primary structure comprises 234 residues: MEMGRRIHSELRNRAPSDVKELALDNSRSNEGKLEALTDEFEELEFLSKINGGLTSISDLPKLKLRKLELRVSGGLEVLAEKCPNLTHLYLSGNKIKDLSTIEPLKQLENLKSLDLFNCEVTNLNDYGENVFKLLLQLTYLDSCYWDHKEAPYSDIEDHVEGLDDEEEGEHEEEYDEDAQVVEDEEGEEEEEEGEEEDVSGGDEEDEEGYNDGEVDGEEDEEELGEEERGQKRK.

4 LRR repeats span residues 44–63, 64–84, 85–107, and 111–134; these read LEFL…LPKL, KLRK…EKCP, NLTH…PLKQ, and LKSL…VFKL. The interval 161–234 is disordered; it reads EGLDDEEEGE…GEEERGQKRK (74 aa). Positions 163–226 are enriched in acidic residues; it reads LDDEEEGEHE…GEEDEEELGE (64 aa).

Belongs to the ANP32 family. In terms of tissue distribution, expressed in activated stem cells, such as mobilized CD34+ cells and cord blood CD34+ cells, but not in resting bone marrow CD34+ cells. Expressed in a variety of neoplastic cell lines, mainly in prostatic adenocarcinoma cell lines. Not expressed in normal prostatic tissue.

This is an uncharacterized protein from Homo sapiens (Human).